The sequence spans 230 residues: CRP-like protein Clp (230 aa).

18–139 contacts a nucleoside 3',5'-cyclic phosphate; the sequence is PSLALDAGTI…APKILYAIGV (122 aa). Residues 158–230 form the HTH crp-type domain; that stretch reads LDVTDRIVRT…GKTVVLYGTR (73 aa). The segment at residues 190 to 209 is a DNA-binding region (H-T-H motif); that stretch reads RQELARLVGCSREMAGRVLK.

Homodimer.

It localises to the cytoplasm. Allosterically inhibited by cyclic di-GMP (c-di-GMP), which binds to Clp and abolishes its ability to bind its target gene promoter. In terms of biological role, global transcriptional regulator that regulates virulence factors production by activating or repressing the expression of a large set of genes in diffusible signal factor (DSF) pathway. This is CRP-like protein Clp (clp) from Xanthomonas axonopodis pv. citri (strain 306).